Consider the following 161-residue polypeptide: Nucleotide-binding protein Shewmr4_3156 (161 aa).

The protein belongs to the YajQ family.

Its function is as follows. Nucleotide-binding protein. This chain is Nucleotide-binding protein Shewmr4_3156, found in Shewanella sp. (strain MR-4).